The sequence spans 467 residues: ATP synthase subunit beta (467 aa).

150–157 (GGAGVGKT) is an ATP binding site.

It belongs to the ATPase alpha/beta chains family. F-type ATPases have 2 components, CF(1) - the catalytic core - and CF(0) - the membrane proton channel. CF(1) has five subunits: alpha(3), beta(3), gamma(1), delta(1), epsilon(1). CF(0) has three main subunits: a(1), b(2) and c(9-12). The alpha and beta chains form an alternating ring which encloses part of the gamma chain. CF(1) is attached to CF(0) by a central stalk formed by the gamma and epsilon chains, while a peripheral stalk is formed by the delta and b chains.

The protein resides in the cell inner membrane. The enzyme catalyses ATP + H2O + 4 H(+)(in) = ADP + phosphate + 5 H(+)(out). Functionally, produces ATP from ADP in the presence of a proton gradient across the membrane. The catalytic sites are hosted primarily by the beta subunits. The protein is ATP synthase subunit beta of Aliivibrio fischeri (strain MJ11) (Vibrio fischeri).